Here is a 37-residue protein sequence, read N- to C-terminus: Large ribosomal subunit protein bL36A (37 aa).

The protein belongs to the bacterial ribosomal protein bL36 family.

The protein is Large ribosomal subunit protein bL36A of Methylobacillus flagellatus (strain ATCC 51484 / DSM 6875 / VKM B-1610 / KT).